Consider the following 602-residue polypeptide: Cytoskeleton-associated protein 4 (602 aa).

Residues 1–83 (MPSAKQRGSK…GGGGKSSSSS (83 aa)) form a disordered region. At 1–106 (MPSAKQRGSK…SASCSRRLGR (106 aa)) the chain is on the cytoplasmic side. Phosphoserine is present on residues Ser-3, Ser-17, and Ser-19. Lys-21 is subject to N6-acetyllysine. A compositionally biased stretch (pro residues) spans 35-52 (KPPPAPQQPPPPPAPHPQ). Residues 53–64 (QHPQQHPQNQAH) show a composition bias toward low complexity. Cys-100 carries S-palmitoyl cysteine; by ZDHHC2 lipidation. The helical transmembrane segment at 107–127 (ALNFLFYLALVAAAAFSGWCV) threads the bilayer. Topologically, residues 128–602 (HHVLEEVQQV…VKVEKIHEKV (475 aa)) are extracellular. Residues 130-214 (VLEEVQQVRR…QKLQNEILKD (85 aa)) are a coiled coil. The residue at position 232 (Ser-232) is a Phosphoserine; by FAM20C. 2 coiled-coil regions span residues 256–460 (TEVQ…GLGS) and 533–602 (LSSL…HEKV). Ser-312 bears the Phosphoserine mark.

As to quaternary structure, interacts with REEP5. Reversibly palmitoylated. Palmitoylation at Cys-100 by ZDHHC2 is required for its trafficking from the ER to the plasma membrane and for its perinuclear localization. Palmitoylation by ZDHHC2 is also required for its function in APF-mediated antiproliferative signaling. Post-translationally, increased phosphorylation during mitosis prevents binding to microtubules.

The protein resides in the endoplasmic reticulum membrane. The protein localises to the cell membrane. Its subcellular location is the cytoplasm. It localises to the cytoskeleton. It is found in the perinuclear region. Mediates the anchoring of the endoplasmic reticulum to microtubules. Its function is as follows. High-affinity epithelial cell surface receptor for the FZD8-related low molecular weight sialoglycopeptide APF/antiproliferative factor. Mediates the APF antiproliferative signaling within cells. This chain is Cytoskeleton-associated protein 4 (CKAP4), found in Homo sapiens (Human).